We begin with the raw amino-acid sequence, 340 residues long: 4-amino-5-hydroxymethyl-2-methylpyrimidine phosphate synthase THI12 (340 aa).

N6-(pyridoxal phosphate)lysine is present on Lys62. His66 is a catalytic residue. 115–118 serves as a coordination point for pyridoxal 5'-phosphate; the sequence is GEFG. The CCCFC; essential for catalytic activity, may be the site of iron coordination signature appears at 195 to 199; sequence CCCFC.

The protein belongs to the NMT1/THI5 family. As to quaternary structure, homodimer. Fe cation is required as a cofactor.

It carries out the reaction N(6)-(pyridoxal phosphate)-L-lysyl-[4-amino-5-hydroxymethyl-2-methylpyrimidine phosphate synthase] + L-histidyl-[4-amino-5-hydroxymethyl-2-methylpyrimidine phosphate synthase] + 2 Fe(3+) + 4 H2O = L-lysyl-[4-amino-5-hydroxymethyl-2-methylpyrimidine phosphate synthase] + (2S)-2-amino-5-hydroxy-4-oxopentanoyl-[4-amino-5-hydroxymethyl-2-methylpyrimidine phosphate synthase] + 4-amino-2-methyl-5-(phosphooxymethyl)pyrimidine + 3-oxopropanoate + 2 Fe(2+) + 2 H(+). Its pathway is cofactor biosynthesis; thiamine diphosphate biosynthesis. Its function is as follows. Responsible for the formation of the pyrimidine heterocycle in the thiamine biosynthesis pathway. Catalyzes the formation of hydroxymethylpyrimidine phosphate (HMP-P) from histidine and pyridoxal phosphate (PLP). The protein uses PLP and the active site histidine to form HMP-P, generating an inactive enzyme. The enzyme can only undergo a single turnover, which suggests it is a suicide enzyme. The chain is 4-amino-5-hydroxymethyl-2-methylpyrimidine phosphate synthase THI12 from Saccharomyces cerevisiae (strain ATCC 204508 / S288c) (Baker's yeast).